The following is a 249-amino-acid chain: 1-(5-phosphoribosyl)-5-[(5-phosphoribosylamino)methylideneamino] imidazole-4-carboxamide isomerase (249 aa).

Residue Asp-8 is the Proton acceptor of the active site. Residue Asp-129 is the Proton donor of the active site.

It belongs to the HisA/HisF family.

Its subcellular location is the cytoplasm. It carries out the reaction 1-(5-phospho-beta-D-ribosyl)-5-[(5-phospho-beta-D-ribosylamino)methylideneamino]imidazole-4-carboxamide = 5-[(5-phospho-1-deoxy-D-ribulos-1-ylimino)methylamino]-1-(5-phospho-beta-D-ribosyl)imidazole-4-carboxamide. It participates in amino-acid biosynthesis; L-histidine biosynthesis; L-histidine from 5-phospho-alpha-D-ribose 1-diphosphate: step 4/9. The chain is 1-(5-phosphoribosyl)-5-[(5-phosphoribosylamino)methylideneamino] imidazole-4-carboxamide isomerase from Magnetococcus marinus (strain ATCC BAA-1437 / JCM 17883 / MC-1).